Reading from the N-terminus, the 665-residue chain is Translation factor GUF1 homolog, mitochondrial (665 aa).

Residues 1–35 constitute a mitochondrion transit peptide; the sequence is MAGAAVLRRSARRIYRHLAAAPAFSRSVLQQPKRL. The segment at 34 to 53 is disordered; it reads RLLSSQSSPEHGARGAVSGS. One can recognise a tr-type G domain in the interval 61–249; that stretch reads ERVRNFSIIA…AVIERIPSPP (189 aa). Residues 70 to 77, 142 to 146, and 196 to 199 contribute to the GTP site; these read AHVDHGKS, DTPGH, and NKID.

The protein belongs to the TRAFAC class translation factor GTPase superfamily. Classic translation factor GTPase family. LepA subfamily.

The protein localises to the mitochondrion inner membrane. It catalyses the reaction GTP + H2O = GDP + phosphate + H(+). Promotes mitochondrial protein synthesis. May act as a fidelity factor of the translation reaction, by catalyzing a one-codon backward translocation of tRNAs on improperly translocated ribosomes. Binds to mitochondrial ribosomes in a GTP-dependent manner. This is Translation factor GUF1 homolog, mitochondrial from Sorghum bicolor (Sorghum).